The chain runs to 413 residues: Tyrosine--tRNA ligase (413 aa).

Position 34 (Y34) interacts with L-tyrosine. Residues 39–48 (CTAQSLHVGN) carry the 'HIGH' region motif. Positions 171 and 175 each coordinate L-tyrosine. Positions 231 to 235 (KMGKT) match the 'KMSKS' region motif. ATP is bound at residue K234. In terms of domain architecture, S4 RNA-binding spans 346–411 (IPITELLVTI…GKKCHILVKI (66 aa)).

It belongs to the class-I aminoacyl-tRNA synthetase family. TyrS type 1 subfamily. Homodimer.

The protein localises to the cytoplasm. It carries out the reaction tRNA(Tyr) + L-tyrosine + ATP = L-tyrosyl-tRNA(Tyr) + AMP + diphosphate + H(+). In terms of biological role, catalyzes the attachment of tyrosine to tRNA(Tyr) in a two-step reaction: tyrosine is first activated by ATP to form Tyr-AMP and then transferred to the acceptor end of tRNA(Tyr). The polypeptide is Tyrosine--tRNA ligase (Orientia tsutsugamushi (strain Boryong) (Rickettsia tsutsugamushi)).